The primary structure comprises 160 residues: Ureidoglycolate lyase (160 aa).

It belongs to the ureidoglycolate lyase family. Homodimer. The cofactor is Ni(2+).

The enzyme catalyses (S)-ureidoglycolate = urea + glyoxylate. It functions in the pathway nitrogen metabolism; (S)-allantoin degradation. Functionally, catalyzes the catabolism of the allantoin degradation intermediate (S)-ureidoglycolate, generating urea and glyoxylate. Involved in the anaerobic utilization of allantoin as sole nitrogen source. Reinforces the induction of genes involved in the degradation of allantoin and glyoxylate by producing glyoxylate. This Escherichia coli O6:H1 (strain CFT073 / ATCC 700928 / UPEC) protein is Ureidoglycolate lyase.